An 88-amino-acid polypeptide reads, in one-letter code: Small ribosomal subunit protein bS20 (88 aa).

Residues 1 to 28 are disordered; the sequence is MANTSSAKKATRKIARRTAVNKSRRTQM.

Binds directly to 16S ribosomal RNA. The chain is Small ribosomal subunit protein bS20 from Rhodopseudomonas palustris (strain ATCC BAA-98 / CGA009).